The chain runs to 556 residues: Formate--tetrahydrofolate ligase (556 aa).

Position 65-72 (65-72 (TPAGEGKS)) interacts with ATP.

It belongs to the formate--tetrahydrofolate ligase family.

The catalysed reaction is (6S)-5,6,7,8-tetrahydrofolate + formate + ATP = (6R)-10-formyltetrahydrofolate + ADP + phosphate. The protein operates within one-carbon metabolism; tetrahydrofolate interconversion. This chain is Formate--tetrahydrofolate ligase, found in Streptococcus equi subsp. zooepidemicus (strain H70).